Consider the following 248-residue polypeptide: Metallo-beta-lactamase type 2 (248 aa).

Positions 1-21 (MKGLKGLLVLALGFTGLQVFG) are cleaved as a signal peptide. The Zn(2+) site is built by histidine 97, histidine 99, aspartate 101, histidine 160, and cysteine 179. Lysine 182 lines the substrate pocket. Histidine 221 provides a ligand contact to Zn(2+).

It belongs to the metallo-beta-lactamase superfamily. Class-B beta-lactamase family. In terms of assembly, monomer. Zn(2+) serves as cofactor.

The protein localises to the periplasm. It catalyses the reaction a beta-lactam + H2O = a substituted beta-amino acid. Functionally, confers resistance to the different beta-lactams antibiotics (penicillin, cephalosporin and carbapenem) via the hydrolysis of the beta-lactam ring. In Elizabethkingia meningoseptica (Chryseobacterium meningosepticum), this protein is Metallo-beta-lactamase type 2 (blaB7).